We begin with the raw amino-acid sequence, 160 residues long: Nuclear transcription factor Y subunit B-5 (160 aa).

Residues 56 to 62 (LPIANVG) mediate DNA binding. The segment at 83-94 (MQECVSEFISFV) is subunit association domain (SAD).

This sequence belongs to the NFYB/HAP3 subunit family. Heterotrimeric transcription factor composed of three components, NF-YA, NF-YB and NF-YC. NF-YB and NF-YC must interact and dimerize for NF-YA association and DNA binding. Expressed in flowers and siliques.

Its subcellular location is the nucleus. Component of the NF-Y/HAP transcription factor complex. The NF-Y complex stimulates the transcription of various genes by recognizing and binding to a CCAAT motif in promoters. The chain is Nuclear transcription factor Y subunit B-5 (NFYB5) from Arabidopsis thaliana (Mouse-ear cress).